The chain runs to 414 residues: Peptide chain release factor subunit 1 (414 aa).

The protein belongs to the eukaryotic release factor 1 family. Heterodimer of two subunits, one of which binds GTP.

Its subcellular location is the cytoplasm. Functionally, directs the termination of nascent peptide synthesis (translation) in response to the termination codons UAA, UAG and UGA. This is Peptide chain release factor subunit 1 (prf1) from Pyrococcus abyssi (strain GE5 / Orsay).